Consider the following 366-residue polypeptide: tRNA/tmRNA (uracil-C(5))-methyltransferase (366 aa).

Residues Gln190, Tyr218, Asn223, Glu239, and Asp299 each contribute to the S-adenosyl-L-methionine site. Cys324 acts as the Nucleophile in catalysis. Glu358 acts as the Proton acceptor in catalysis.

This sequence belongs to the class I-like SAM-binding methyltransferase superfamily. RNA M5U methyltransferase family. TrmA subfamily.

The enzyme catalyses uridine(54) in tRNA + S-adenosyl-L-methionine = 5-methyluridine(54) in tRNA + S-adenosyl-L-homocysteine + H(+). It catalyses the reaction uridine(341) in tmRNA + S-adenosyl-L-methionine = 5-methyluridine(341) in tmRNA + S-adenosyl-L-homocysteine + H(+). Functionally, dual-specificity methyltransferase that catalyzes the formation of 5-methyluridine at position 54 (m5U54) in all tRNAs, and that of position 341 (m5U341) in tmRNA (transfer-mRNA). This Salmonella heidelberg (strain SL476) protein is tRNA/tmRNA (uracil-C(5))-methyltransferase.